A 328-amino-acid polypeptide reads, in one-letter code: NAD(P)H-dependent pentose reductase (328 aa).

The active-site Proton donor is the Tyr-50. His-112 is a binding site for substrate. NAD(+) is bound by residues 174–175 (AN), 223–232 (SSFGPQSFVE), and 279–289 (KSNNVDRLKQN).

This sequence belongs to the aldo/keto reductase family.

In terms of biological role, pentose reductase with a broad substrate affinity involved in pentose catabolism. Has highest reductase activities with L-arabinose and D-xylose as substrates, and displays much lower activities with D-ribose, D-galactose and D-glucose. Has highest dehydrogenase activity with L-arabitol as substrate, followed by xylitol and D-sorbitol. May be responsible for the first step of the L-arabinose catabolic pathway. The protein is NAD(P)H-dependent pentose reductase (PRD1) of Pyricularia oryzae (strain 70-15 / ATCC MYA-4617 / FGSC 8958) (Rice blast fungus).